The sequence spans 106 residues: ER membrane protein complex subunit 5 (106 aa).

At 1 to 12 (MESSTINAKKIS) the chain is on the cytoplasmic side. Residues 13–33 (VLLTLFSIIGYTAYSAHESIL) traverse the membrane as a helical segment. Residues 34-46 (EIRQDGKLPLDIK) lie on the Lumenal side of the membrane. A helical transmembrane segment spans residues 47 to 67 (CEVILVTLLFTFTTVIIASPL). Over 68 to 106 (RSIQLNKWSHQRSDLAFLNSRTNFLRIKELKEKIEKVKN) the chain is Cytoplasmic.

The protein belongs to the membrane magnesium transporter (TC 1.A.67) family. Component of the ER membrane protein complex (EMC).

It localises to the endoplasmic reticulum membrane. Its function is as follows. The EMC seems to be required for efficient folding of proteins in the endoplasmic reticulum (ER). This is ER membrane protein complex subunit 5 (emc5) from Schizosaccharomyces pombe (strain 972 / ATCC 24843) (Fission yeast).